Here is a 200-residue protein sequence, read N- to C-terminus: Polyadenylate-binding protein 1-like 2 (200 aa).

RRM domains follow at residues Ala2–Arg80 and Gly90–Ser166. The disordered stretch occupies residues Arg170–Arg200. The segment covering Asp188–Arg200 has biased composition (acidic residues).

In Homo sapiens (Human), this protein is Polyadenylate-binding protein 1-like 2 (PABPC1L2A).